We begin with the raw amino-acid sequence, 148 residues long: Hemoglobin subunit beta-2 (148 aa).

Residues 3–148 (EWTDAERTAI…VVSALCRQYH (146 aa)) enclose the Globin domain. 2 residues coordinate heme b: H64 and H93.

Heterotetramer of two alpha chains and two beta chains. As to expression, red blood cells.

Functionally, involved in oxygen transport from gills to the various peripheral tissues. The chain is Hemoglobin subunit beta-2 (ba2) from Danio rerio (Zebrafish).